Consider the following 126-residue polypeptide: SOSS complex subunit C homolog (126 aa).

The tract at residues 106-126 is disordered; it reads LEPLPSPATTPTAPPSHSISK. Residues 107–119 are compositionally biased toward pro residues; sequence EPLPSPATTPTAP.

Belongs to the SOSS-C family.

The sequence is that of SOSS complex subunit C homolog from Drosophila sechellia (Fruit fly).